An 811-amino-acid polypeptide reads, in one-letter code: Transmembrane protease serine 6 (811 aa).

The disordered stretch occupies residues 1 to 48 (MPRCFQLPCSTRMPTTEVPQAADGQGDAGDGEEAAEPEGKFKPPKNTK). The Cytoplasmic segment spans residues 1–59 (MPRCFQLPCSTRMPTTEVPQAADGQGDAGDGEEAAEPEGKFKPPKNTKRKNRDYVRFTP). Residues 8–18 (PCSTRMPTTEV) are compositionally biased toward polar residues. The chain crosses the membrane as a helical; Signal-anchor for type II membrane protein span at residues 60 to 80 (LLLVLAALVSAGVMLWYFLGY). The Extracellular portion of the chain corresponds to 81–811 (KAEVTVSQVY…VINWIQQVLT (731 aa)). The SEA domain maps to 86-209 (VSQVYSGSLR…EGLVILEASV (124 aa)). Asn-138, Asn-184, Asn-216, Asn-338, Asn-433, and Asn-453 each carry an N-linked (GlcNAc...) asparagine glycan. 2 CUB domains span residues 213 to 336 (VVLN…QDCQ) and 323 to 440 (FLLS…QISL). Cys-335 and Cys-366 are joined by a disulfide. 3 LDL-receptor class A domains span residues 445 to 477 (VQVYYSLYNQSDPCPGEFLCSVNGLCVPACDGI), 478 to 514 (KDCPNGLDERNCVCRAMFQCQEDSTCISLPRVCDRQP), and 518 to 555 (NGSDEEQCQEGVPCGTFTFQCEDRSCVKKPNPECDGQS). Cystine bridges form between Cys-458–Cys-470, Cys-464–Cys-480, Cys-474–Cys-489, Cys-491–Cys-503, Cys-497–Cys-516, Cys-510–Cys-525, Cys-531–Cys-543, Cys-538–Cys-557, Cys-551–Cys-566, and Cys-602–Cys-618. Residue Asn-518 is glycosylated (N-linked (GlcNAc...) asparagine). The 235-residue stretch at 577–811 (IVGGTVSSEG…VINWIQQVLT (235 aa)) folds into the Peptidase S1 domain. Catalysis depends on charge relay system residues His-617 and Asp-668. 3 disulfides stabilise this stretch: Cys-702–Cys-768, Cys-733–Cys-747, and Cys-758–Cys-787. Catalysis depends on Ser-762, which acts as the Charge relay system.

It belongs to the peptidase S1 family. Interacts with HJV. Post-translationally, the single-chain zymogen undergoes autoproteolytic processing. This results in TMPRSS6 shedding from the cell surface and conversion into an activated two-chains form which is released extracellularly. The process involves a trans-activation mechanism that requires TMPRSS6 oligomerization. In terms of tissue distribution, expressed at highest levels in adult mice liver, kidney and uterus. Also strongly expressed within the nasal cavity by olfactory epithelial cells. A weak, but detectable, signal in adult mice tissues analyzed including brain, lung, heart, kidney, spleen, muscle, intestine, thymus and pancreas. No signal in residual embryonic yolk sac, developing kidney tubules or in embryonic tissues analyzed including lung, heart, gastrointestinal tract and epithelium of the oral cavity.

It is found in the cell membrane. Functionally, membrane-bound serine protease. Through the cleavage of cell surface HJV, a regulator of the expression of the iron absorption-regulating hormone hepicidin/HAMP, plays a role in iron homeostasis. The sequence is that of Transmembrane protease serine 6 (Tmprss6) from Mus musculus (Mouse).